A 217-amino-acid chain; its full sequence is Probable transaldolase (217 aa).

The Schiff-base intermediate with substrate role is filled by Lys83.

This sequence belongs to the transaldolase family. Type 3B subfamily.

The protein resides in the cytoplasm. The enzyme catalyses D-sedoheptulose 7-phosphate + D-glyceraldehyde 3-phosphate = D-erythrose 4-phosphate + beta-D-fructose 6-phosphate. It functions in the pathway carbohydrate degradation; pentose phosphate pathway; D-glyceraldehyde 3-phosphate and beta-D-fructose 6-phosphate from D-ribose 5-phosphate and D-xylulose 5-phosphate (non-oxidative stage): step 2/3. Transaldolase is important for the balance of metabolites in the pentose-phosphate pathway. This Fervidobacterium nodosum (strain ATCC 35602 / DSM 5306 / Rt17-B1) protein is Probable transaldolase.